We begin with the raw amino-acid sequence, 412 residues long: Cinnamoyl-CoA:phenyllactate CoA-transferase (412 aa).

Residue Asn-102 coordinates CoA. Asp-176 acts as the Nucleophile in catalysis.

In terms of assembly, homodimer. Part of the heterotrimeric phenyllactate dehydratase complex FldABC, composed of (R)-phenyllactate CoA-transferase (FldA) and a heterodimeric (R)-phenyllactyl-CoA dehydratase (FldB and FldC).

It carries out the reaction (E)-cinnamoyl-CoA + (R)-3-phenyllactate = (R)-3-phenyllactoyl-CoA + (E)-cinnamate. It functions in the pathway amino-acid degradation; L-phenylalanine degradation. Functionally, component of the phenyllactate dehydratase complex FldABC that is involved in the fermentation of L-phenylalanine via a Stickland reaction. This complex catalyzes the reversible syn-dehydration of (R)-phenyllactate to (E)-cinnamate in two steps, a CoA-transfer from cinnamoyl-CoA to phenyllactate, catalyzed by FldA, followed by the dehydration of phenyllactyl-CoA to cinnamoyl-CoA, catalyzed by FldB and FldC. In vitro, FldA can use 3-phenylpropanoate as a better CoA-acceptor than phenyllactate. In Clostridium sporogenes, this protein is Cinnamoyl-CoA:phenyllactate CoA-transferase.